The following is an 80-amino-acid chain: MTNTKTLEANISFEEALKELEEIVKKIDNGQESLETAVNSFERGILLKNHCEKKLKEARLKIEKITKLADSTVVLEEMEV.

This sequence belongs to the XseB family. As to quaternary structure, heterooligomer composed of large and small subunits.

It is found in the cytoplasm. The catalysed reaction is Exonucleolytic cleavage in either 5'- to 3'- or 3'- to 5'-direction to yield nucleoside 5'-phosphates.. Its function is as follows. Bidirectionally degrades single-stranded DNA into large acid-insoluble oligonucleotides, which are then degraded further into small acid-soluble oligonucleotides. This is Exodeoxyribonuclease 7 small subunit from Rickettsia conorii (strain ATCC VR-613 / Malish 7).